Consider the following 583-residue polypeptide: Putative ABC transporter ATP-binding protein exp8 (583 aa).

The 284-residue stretch at 25-308 folds into the ABC transmembrane type-1 domain; the sequence is TFLALSFLLA…VTQNFSTLQT (284 aa). Transmembrane regions (helical) follow at residues 26–46, 61–81, 135–155, 159–179, and 259–279; these read FLALSFLLATTVIKSVIPLVA, AVTVLLVYYGLYILQTVVQYV, MFSGILSSFISAVFIFLTTLY, VLDFRLTALVLLFLPLIFLLV, and LGYAVLMAYFGYRGFSIGITV. The region spanning 341 to 574 is the ABC transporter domain; the sequence is IRFEHVCFSY…GGTYHKMYSL (234 aa). Residue 374–381 coordinates ATP; the sequence is GHTGSGKS.

Belongs to the ABC transporter superfamily.

It localises to the cell membrane. This is Putative ABC transporter ATP-binding protein exp8 (exp8) from Streptococcus pneumoniae serotype 4 (strain ATCC BAA-334 / TIGR4).